We begin with the raw amino-acid sequence, 344 residues long: MDIEAEPSLRSIVNHESLKWIFVGGKGGVGKTTTSSSISIQLALHNPNKKYLLISTDPAHNLSDAFNQKFGKDARQVEGLPNLSCMEIDPDSTLENLQKNNESTFGSAGGNDPLKSMMGDITGSIPGIDEAFSFMEVLKHIGETKENQIKYDTVIFDTAPTGHTLRFLQLPSTLEKLLGKVNELSGRFGPMLNNLLGSQGGQSIDFASKIKEIQVQVTEVNKQFQDPELTTFVCVCISEFLSLYETERLIQELMSYNMDVNSIVINQLLFSDDSECRRCNARWRMQKKYLDQMDELYEDYHLVKMPLLAMEVRGLENLKKFSKYLIEPYNSETDGHVVFDLEEQ.

26–33 contributes to the ATP binding site; sequence KGGVGKTT. Asp57 is an active-site residue. The ATP site is built by Glu239 and Asn266. 2 residues coordinate Zn(2+): Cys276 and Cys279.

Belongs to the arsA ATPase family. As to quaternary structure, homodimer. Component of the Golgi to ER traffic (GET) complex, which is composed of GET1, GET2 and GET3. Within the complex, GET1 and GET2 form a heterotetramer which is stabilized by phosphatidylinositol binding and which binds to the GET3 homodimer. Interacts with the chloride channel protein GEF1.

It is found in the cytoplasm. The protein resides in the endoplasmic reticulum. It localises to the golgi apparatus. ATPase required for the post-translational delivery of tail-anchored (TA) proteins to the endoplasmic reticulum. Recognizes and selectively binds the transmembrane domain of TA proteins in the cytosol. This complex then targets to the endoplasmic reticulum by membrane-bound receptors GET1 and GET2, where the tail-anchored protein is released for insertion. This process is regulated by ATP binding and hydrolysis. ATP binding drives the homodimer towards the closed dimer state, facilitating recognition of newly synthesized TA membrane proteins. ATP hydrolysis is required for insertion. Subsequently, the homodimer reverts towards the open dimer state, lowering its affinity for the GET1-GET2 receptor, and returning it to the cytosol to initiate a new round of targeting. Cooperates with the HDEL receptor ERD2 to mediate the ATP-dependent retrieval of resident ER proteins that contain a C-terminal H-D-E-L retention signal from the Golgi to the ER. Involved in low-level resistance to the oxyanions arsenite and arsenate, and in heat tolerance. The protein is ATPase GET3 of Komagataella phaffii (strain GS115 / ATCC 20864) (Yeast).